A 508-amino-acid polypeptide reads, in one-letter code: MLTFFFLWISTLLLSSFIVYLLYRRRSAQCPPLPPGPNGWPILGNLPQLGAKPHQTLDALSKQYGPLFRLRLGSVNVVVASSSAVAAQFLRTHDVNFSNRPPNSGAEHVAYNYQDLVFAPYGPRWRMLRKLCSVHLFSLKALDDLRPVRQGEVACLVRNLRRHADTGVLVNLGKALNVCATNALARAMLGRRVFADEDAQLAEADEFKEMVVELMRLAGVFNVGDFVPGLGWLDLQGVVGKMKRLHRRYDAFLDRVIEENQANAKSGDLLSVLIRLKEADAEGEIKLNNTDIKALLLNLFTAGTDTSSSTVEWVLAELIRHPDILQKTQHELDSVIGRDRLVAESDLPNLPYLQAVVKETFRLHPSTPLSLPRMASEECIVNGYKIPKHATLLVNVWSIGRDAAVWNDPLEFRPSRFLPGGEREHVDVKGNDFEVIPFGAGRRICAGLSLGLRMVQFMTATIVHAYDWSLPKGQECQKLDMEEAYGLTLQRAVPLMVQPIPRLSHKAY.

The chain crosses the membrane as a helical span at residues 2 to 22 (LTFFFLWISTLLLSSFIVYLL). Cysteine 445 is a heme binding site.

This sequence belongs to the cytochrome P450 family. Heme serves as cofactor. In terms of tissue distribution, expressed in young cromes.

The protein resides in the membrane. It catalyses the reaction a 3'-unsubstituted flavone + reduced [NADPH--hemoprotein reductase] + O2 = a 3'-hydroxyflavone + oxidized [NADPH--hemoprotein reductase] + H2O + H(+). It carries out the reaction (2S)-naringenin + reduced [NADPH--hemoprotein reductase] + O2 = (S)-eriodictyol + oxidized [NADPH--hemoprotein reductase] + H2O + H(+). The enzyme catalyses (2R,3R)-dihydrokaempferol + reduced [NADPH--hemoprotein reductase] + O2 = (2R,3R)-dihydroquercetin + oxidized [NADPH--hemoprotein reductase] + H2O + H(+). The catalysed reaction is kaempferol + reduced [NADPH--hemoprotein reductase] + O2 = quercetin + oxidized [NADPH--hemoprotein reductase] + H2O + H(+). It functions in the pathway flavonoid metabolism. In terms of biological role, flavonoid 3'-hydroxylase that catalyzes the 3'-hydroxylation of flavanones, dihydroflavonols and flavonols. Converts narigenin to eriodictyol, dihydrokaempferol to dihydroquercetin and kaempferol to quercetin. This chain is Flavonoid 3'-monooxygenase CYP75B137, found in Crocosmia x crocosmiiflora (Montbretia).